A 756-amino-acid chain; its full sequence is MAWSPPATLFLFLLLLGQPPPSRPQSLGTTKLRLVGPESKPEEGRLEVLHQGQWGTVCDDNFAIQEATVACRQLGFEAALTWAHSAKYGQGEGPIWLDNVRCVGTESSLDQCGSNGWGVSDCSHSEDVGVICHPRRHRGYLSETVSNALGPQGRRLEEVRLKPILASAKQHSPVTEGAVEVKYEGHWRQVCDQGWTMNNSRVVCGMLGFPSEVPVDSHYYRKVWDLKMRDPKSRLKSLTNKNSFWIHQVTCLGTEPHMANCQVQVAPARGKLRPACPGGMHAVVSCVAGPHFRPPKTKPQRKGSWAEEPRVRLRSGAQVGEGRVEVLMNRQWGTVCDHRWNLISASVVCRQLGFGSAREALFGARLGQGLGPIHLSEVRCRGYERTLSDCPALEGSQNGCQHENDAAVRCNVPNMGFQNQVRLAGGRIPEEGLLEVQVEVNGVPRWGSVCSENWGLTEAMVACRQLGLGFAIHAYKETWFWSGTPRAQEVVMSGVRCSGTELALQQCQRHGPVHCSHGGGRFLAGVSCMDSAPDLVMNAQLVQETAYLEDRPLSQLYCAHEENCLSKSADHMDWPYGYRRLLRFSTQIYNLGRTDFRPKTGRDSWVWHQCHRHYHSIEVFTHYDLLTLNGSKVAEGHKASFCLEDTNCPTGLQRRYACANFGEQGVTVGCWDTYRHDIDCQWVDITDVGPGNYIFQVIVNPHYEVAESDFSNNMLQCRCKYDGHRVWLHNCHTGNSYPANAELSLEQEQRLRNNLI.

The N-terminal stretch at 1–24 is a signal peptide; sequence MAWSPPATLFLFLLLLGQPPPSRP. SRCR domains follow at residues 32 to 133, 159 to 287, 311 to 411, and 421 to 529; these read LRLV…VICH, VRLK…VSCV, VRLR…VRCN, and VRLA…VSCM. Cystine bridges form between C58–C122, C71–C132, C102–C112, C191–C276, C204–C286, C251–C261, C336–C400, C349–C410, C380–C390, C450–C515, C463–C528, C497–C507, C558–C564, C610–C658, C642–C648, C670–C680, and C717–C731. A glycan (N-linked (GlcNAc...) asparagine) is linked at N198. Positions 533–736 are lysyl-oxidase like; it reads PDLVMNAQLV…WLHNCHTGNS (204 aa). Cu cation is bound by residues H611, H613, and H615. The N-linked (GlcNAc...) asparagine glycan is linked to N629. The lysine tyrosylquinone (Lys-Tyr) cross-link spans 638–674; that stretch reads KASFCLEDTNCPTGLQRRYACANFGEQGVTVGCWDTY. Residue Y674 is modified to 2',4',5'-topaquinone.

Belongs to the lysyl oxidase family. Cu cation is required as a cofactor. Lysine tyrosylquinone residue serves as cofactor. The lysine tyrosylquinone cross-link (LTQ) is generated by condensation of the epsilon-amino group of a lysine with a topaquinone produced by oxidation of tyrosine. Post-translationally, may be proteolytically cleaved by BMP1. As to expression, expressed in many tissues, the highest levels among the tissues studied being in the skeletal muscle, testis and pancreas. Expressed in cartilage.

The protein localises to the secreted. Its subcellular location is the extracellular space. It catalyses the reaction L-lysyl-[protein] + O2 + H2O = (S)-2-amino-6-oxohexanoyl-[protein] + H2O2 + NH4(+). Inhibited by beta-aminopropionitrile (BAPN). In terms of biological role, catalyzes the oxidative deamination of lysine and hydroxylysine residues in collagen and elastin, resulting in the formation of covalent cross-linkages, and the stabilization of collagen and elastin fibers. The chain is Lysyl oxidase homolog 4 (LOXL4) from Homo sapiens (Human).